A 626-amino-acid chain; its full sequence is Phosphomethylpyrimidine synthase (626 aa).

Residues Asn-237, Met-266, Tyr-295, His-331, 351–353, 392–395, and Glu-431 contribute to the substrate site; these read SRG and DGLR. His-435 is a binding site for Zn(2+). Substrate is bound at residue Tyr-458. Residue His-499 participates in Zn(2+) binding. 3 residues coordinate [4Fe-4S] cluster: Cys-579, Cys-582, and Cys-587.

Belongs to the ThiC family. Homodimer. [4Fe-4S] cluster serves as cofactor.

The catalysed reaction is 5-amino-1-(5-phospho-beta-D-ribosyl)imidazole + S-adenosyl-L-methionine = 4-amino-2-methyl-5-(phosphooxymethyl)pyrimidine + CO + 5'-deoxyadenosine + formate + L-methionine + 3 H(+). Its pathway is cofactor biosynthesis; thiamine diphosphate biosynthesis. Functionally, catalyzes the synthesis of the hydroxymethylpyrimidine phosphate (HMP-P) moiety of thiamine from aminoimidazole ribotide (AIR) in a radical S-adenosyl-L-methionine (SAM)-dependent reaction. In Cupriavidus necator (strain ATCC 17699 / DSM 428 / KCTC 22496 / NCIMB 10442 / H16 / Stanier 337) (Ralstonia eutropha), this protein is Phosphomethylpyrimidine synthase.